A 1070-amino-acid chain; its full sequence is DNA-directed RNA polymerase subunit beta (1070 aa).

It belongs to the RNA polymerase beta chain family. In plastids the minimal PEP RNA polymerase catalytic core is composed of four subunits: alpha, beta, beta', and beta''. When a (nuclear-encoded) sigma factor is associated with the core the holoenzyme is formed, which can initiate transcription.

It localises to the plastid. It catalyses the reaction RNA(n) + a ribonucleoside 5'-triphosphate = RNA(n+1) + diphosphate. Functionally, DNA-dependent RNA polymerase catalyzes the transcription of DNA into RNA using the four ribonucleoside triphosphates as substrates. The polypeptide is DNA-directed RNA polymerase subunit beta (rpoB) (Cuscuta reflexa (Southern Asian dodder)).